Reading from the N-terminus, the 125-residue chain is Small ribosomal subunit protein uS12c (125 aa).

Residues 1–23 (MPTLEHLTRSPRKKIKRKTKSPA) are disordered. The segment covering 9 to 20 (RSPRKKIKRKTK) has biased composition (basic residues).

It belongs to the universal ribosomal protein uS12 family. In terms of assembly, part of the 30S ribosomal subunit.

It is found in the plastid. The protein resides in the chloroplast. In terms of biological role, with S4 and S5 plays an important role in translational accuracy. Located at the interface of the 30S and 50S subunits. The sequence is that of Small ribosomal subunit protein uS12c (rps12) from Euglena gracilis.